A 785-amino-acid polypeptide reads, in one-letter code: MNDKILKILEFGEITKRLSKLAITAPAKEAALKLRPSSNFDQVQNELKQTLALADLLRVKGRLPLTDFQDVHPSTKRLGVKANLNAQELGNLLLVLSLANEINKFLEDVDDEKLNLSAIDSVLDQLDVPDLLFRELKKSVDYDGEVLDTASNALARLRHDMRSNEEDIKNRMDAYTKGNSSKYLSEQIVTIRDDRYVIPVKQEYRGKFGGVVHDQSASGQTLFIEPEAVLNLNNRQQNLIAQEKQEIRNILKHLSSLAREEINSINNIANSLTRLDFLQAKAKLAKEMKASEPKLTQDHSLELRNARHPLIDPEKVVPNDIRLGGDYDTMLITGPNTGGKTITLKTAGLLQLMAQSGLFIPAEEGSKVGVFKEVYADIGDEQSIEQSLSTFSSHINDIIAIMKNVDKETLVLIDEIGAGTDPEEGASLAISILDFLRKKDAKIMVTTHYPELKLYGYNRPRTINASMEFDLKTLSPTYHLQIGIPGHSNAFAIARRLGMREDVVKNAQNLMADEDSDINKMIAKLNAQTKAATTARNRLETSLDRSQKLEQKLQQALDWYNQRVQKQLDFAQERANEVVAKRRKKADKIIAELEKQKNVGVKENKIIEAKGELNSLERQAHNLAHNKVLQREKRQHHVSVGDQVKVLSYGQTGTITKKLSEHEYEVQIGIIKVKVSDRDIERIAKNNAQPKKKLVRATSAIRRSNAHSELDLRGQRYDEAMTNLDRYIDSALLAGLDIVTIIHGIGTGAIRKGVWQYLRSSNHVKGFNYAPANEGGNGATIVKLK.

334–341 (GPNTGGKT) contacts ATP. The 76-residue stretch at 710 to 785 (LDLRGQRYDE…GNGATIVKLK (76 aa)) folds into the Smr domain.

The protein belongs to the DNA mismatch repair MutS family. MutS2 subfamily. In terms of assembly, homodimer. Binds to stalled ribosomes, contacting rRNA.

Endonuclease that is involved in the suppression of homologous recombination and thus may have a key role in the control of bacterial genetic diversity. Functionally, acts as a ribosome collision sensor, splitting the ribosome into its 2 subunits. Detects stalled/collided 70S ribosomes which it binds and splits by an ATP-hydrolysis driven conformational change. Acts upstream of the ribosome quality control system (RQC), a ribosome-associated complex that mediates the extraction of incompletely synthesized nascent chains from stalled ribosomes and their subsequent degradation. Probably generates substrates for RQC. This is Endonuclease MutS2 from Lactobacillus helveticus (strain DPC 4571).